Reading from the N-terminus, the 415-residue chain is Serine hydroxymethyltransferase (415 aa).

Residues L121 and 125 to 127 (GHL) contribute to the (6S)-5,6,7,8-tetrahydrofolate site. K229 is modified (N6-(pyridoxal phosphate)lysine). 352–354 (SPF) is a (6S)-5,6,7,8-tetrahydrofolate binding site.

The protein belongs to the SHMT family. As to quaternary structure, homodimer. It depends on pyridoxal 5'-phosphate as a cofactor.

It localises to the cytoplasm. The enzyme catalyses (6R)-5,10-methylene-5,6,7,8-tetrahydrofolate + glycine + H2O = (6S)-5,6,7,8-tetrahydrofolate + L-serine. It participates in one-carbon metabolism; tetrahydrofolate interconversion. The protein operates within amino-acid biosynthesis; glycine biosynthesis; glycine from L-serine: step 1/1. Its function is as follows. Catalyzes the reversible interconversion of serine and glycine with tetrahydrofolate (THF) serving as the one-carbon carrier. This reaction serves as the major source of one-carbon groups required for the biosynthesis of purines, thymidylate, methionine, and other important biomolecules. Also exhibits THF-independent aldolase activity toward beta-hydroxyamino acids, producing glycine and aldehydes, via a retro-aldol mechanism. In Methylobacillus flagellatus (strain ATCC 51484 / DSM 6875 / VKM B-1610 / KT), this protein is Serine hydroxymethyltransferase.